The following is a 197-amino-acid chain: Peptide deformylase (197 aa).

The Fe cation site is built by C106 and H148. The active site involves E149. H152 is a Fe cation binding site.

This sequence belongs to the polypeptide deformylase family. The cofactor is Fe(2+).

The catalysed reaction is N-terminal N-formyl-L-methionyl-[peptide] + H2O = N-terminal L-methionyl-[peptide] + formate. Its function is as follows. Removes the formyl group from the N-terminal Met of newly synthesized proteins. Requires at least a dipeptide for an efficient rate of reaction. N-terminal L-methionine is a prerequisite for activity but the enzyme has broad specificity at other positions. The chain is Peptide deformylase from Mycobacterium marinum (strain ATCC BAA-535 / M).